Here is a 900-residue protein sequence, read N- to C-terminus: Bifunctional uridylyltransferase/uridylyl-removing enzyme (900 aa).

Residues 1–342 (MPQVDPELFD…PCEQPVQIQP (342 aa)) are uridylyltransferase. The uridylyl-removing stretch occupies residues 343 to 705 (LNSRFQLRDG…TTQREFESGS (363 aa)). An HD domain is found at 461-583 (VDAHTLNLIK…VGDQTHLDYL (123 aa)). 2 consecutive ACT domains span residues 706–789 (QIFI…IIQR) and 816–891 (VLEV…DNGR).

The protein belongs to the GlnD family. Mg(2+) serves as cofactor.

It catalyses the reaction [protein-PII]-L-tyrosine + UTP = [protein-PII]-uridylyl-L-tyrosine + diphosphate. The catalysed reaction is [protein-PII]-uridylyl-L-tyrosine + H2O = [protein-PII]-L-tyrosine + UMP + H(+). Uridylyltransferase (UTase) activity is inhibited by glutamine, while glutamine activates uridylyl-removing (UR) activity. Its function is as follows. Modifies, by uridylylation and deuridylylation, the PII regulatory proteins (GlnB and homologs), in response to the nitrogen status of the cell that GlnD senses through the glutamine level. Under low glutamine levels, catalyzes the conversion of the PII proteins and UTP to PII-UMP and PPi, while under higher glutamine levels, GlnD hydrolyzes PII-UMP to PII and UMP (deuridylylation). Thus, controls uridylylation state and activity of the PII proteins, and plays an important role in the regulation of nitrogen assimilation and metabolism. The sequence is that of Bifunctional uridylyltransferase/uridylyl-removing enzyme from Pseudomonas aeruginosa (strain ATCC 15692 / DSM 22644 / CIP 104116 / JCM 14847 / LMG 12228 / 1C / PRS 101 / PAO1).